A 176-amino-acid polypeptide reads, in one-letter code: Tubulin polymerization-promoting protein family member 3 (176 aa).

N-acetylalanine is present on Ala-2. The interval 132–152 (TGSHKERFDESGKGKGIAGRQ) is disordered. Positions 134 to 144 (SHKERFDESGK) are enriched in basic and acidic residues.

It belongs to the TPPP family. As to expression, expressed in endometrium during the mid-secretory phase (LH + 7) (at protein level).

It localises to the cytoplasm. Its subcellular location is the cytoskeleton. Its function is as follows. Regulator of microtubule dynamic that has microtubule bundling activity. Required for embryo implantation; possibly by regulating beta-catenin. Also required for decidualization via regulation of beta-catenin. This chain is Tubulin polymerization-promoting protein family member 3, found in Homo sapiens (Human).